Here is a 217-residue protein sequence, read N- to C-terminus: Redox-sensing transcriptional repressor Rex (217 aa).

Residues 17-56 (RYLRYVEDLLNHDVLRISSSELSQRMGYTASQVRQDFNNF) constitute a DNA-binding region (H-T-H motif). An NAD(+)-binding site is contributed by 91 to 96 (GVGNLG).

It belongs to the transcriptional regulatory Rex family. As to quaternary structure, homodimer.

The protein resides in the cytoplasm. In terms of biological role, modulates transcription in response to changes in cellular NADH/NAD(+) redox state. The protein is Redox-sensing transcriptional repressor Rex of Caldicellulosiruptor bescii (strain ATCC BAA-1888 / DSM 6725 / KCTC 15123 / Z-1320) (Anaerocellum thermophilum).